Here is a 338-residue protein sequence, read N- to C-terminus: Malate dehydrogenase, mitochondrial (338 aa).

A mitochondrion-targeting transit peptide spans 1–24 (MLSALARPASAALRRSFSTSAQNN). NAD(+)-binding positions include 31–37 (GASGGIG) and Asp57. A glycan (O-linked (GlcNAc) serine) is linked at Ser33. Lys78 and Lys91 each carry N6-acetyllysine; alternate. N6-succinyllysine; alternate is present on residues Lys78 and Lys91. The substrate site is built by Arg104 and Arg110. Residues Asn117 and 140-142 (IAN) contribute to the NAD(+) site. Position 142 (Asn142) interacts with substrate. Lys165 is modified (N6-acetyllysine). Substrate is bound at residue Arg176. The residue at position 185 (Lys185) is an N6-acetyllysine; alternate. N6-succinyllysine; alternate is present on Lys185. The active-site Proton acceptor is His200. Lys203 carries the N6-succinyllysine modification. An N6-acetyllysine; alternate mark is found at Lys215 and Lys239. 2 positions are modified to N6-succinyllysine; alternate: Lys215 and Lys239. Lys239 bears the N6-malonyllysine; alternate mark. Ser246 carries the post-translational modification Phosphoserine. Residue Met251 coordinates NAD(+). N6-succinyllysine is present on Lys269. An N6-acetyllysine; alternate mark is found at Lys296, Lys301, Lys314, and Lys324. 4 positions are modified to N6-succinyllysine; alternate: Lys296, Lys301, Lys314, and Lys324. Phosphoserine is present on Ser326. N6-acetyllysine; alternate is present on residues Lys328, Lys329, and Lys335. N6-succinyllysine; alternate is present on Lys328. An N6-malonyllysine; alternate modification is found at Lys329. Lys335 bears the N6-succinyllysine; alternate mark.

This sequence belongs to the LDH/MDH superfamily. MDH type 1 family. In terms of assembly, homodimer. In terms of processing, acetylation is enhanced after treatment either with trichostin A (TCA) or with nicotinamide (NAM) with the appearance of tri- and tetraacetylations. Glucose also increases acetylation.

Its subcellular location is the mitochondrion matrix. The enzyme catalyses (S)-malate + NAD(+) = oxaloacetate + NADH + H(+). Its activity is regulated as follows. Enzyme activity is enhanced by acetylation. The chain is Malate dehydrogenase, mitochondrial (MDH2) from Macaca fascicularis (Crab-eating macaque).